A 420-amino-acid chain; its full sequence is MIOREX complex component 9 (420 aa).

The next 2 helical transmembrane spans lie at 125–145 and 149–169; these read VYKVSPFFIIFATASIFTFIL and IVVIPLIFHFFFPLLIMFFFF.

As to quaternary structure, associates with the mitochondrial ribosome.

The protein resides in the mitochondrion. It localises to the mitochondrion membrane. Its function is as follows. Component of MIOREX complexes, large expressome-like assemblies of ribosomes with factors involved in all the steps of post-transcriptional gene expression. The chain is MIOREX complex component 9 from Saccharomyces cerevisiae (strain ATCC 204508 / S288c) (Baker's yeast).